The sequence spans 1585 residues: Sterol 3-beta-glucosyltransferase (1585 aa).

The segment covering 1–18 (MSPPISPTPPPLQPPFPP) has biased composition (pro residues). Disordered stretches follow at residues 1–154 (MSPP…CDFR), 177–225 (PWEE…PTHT), and 249–279 (YQYA…LPKG). 3 stretches are compositionally biased toward polar residues: residues 65-77 (DQAT…SLIP), 105-123 (DAQT…STHE), and 132-148 (PRTS…QMAE). Over residues 178-194 (WEEDDDSDDGEDDDEFI) the composition is skewed to acidic residues. A compositionally biased stretch (low complexity) spans 255–273 (ETSSRRTSAAGSESSSEGE). The GRAM 1 domain maps to 387–555 (ERLMEVFGLE…EAIVDVEKSP (169 aa)). Residues 438-530 (LLVKSGPLHK…WVKAIQKVMF (93 aa)) enclose the PH domain. Disordered stretches follow at residues 625 to 645 (TSHA…LGMA) and 666 to 852 (DGEP…GSES). Over residues 670–689 (LEEHSQGPHHNDEDASHLPH) the composition is skewed to basic and acidic residues. Polar residues-rich tracts occupy residues 760–785 (TDSS…QASV), 806–817 (NKPSVVDSNSAE), and 827–840 (SWTS…QMVK). Residues 862–933 (RKFRTFFALS…RDLYGLKAQK (72 aa)) enclose the GRAM 2 domain. The UDP-alpha-D-glucose site is built by Ser1043, Arg1044, Asp1046, Ile1358, His1360, His1373, Gly1377, Thr1378, Asp1397, and Gln1398. The interval 1499 to 1555 (NRVRSRSRSRSRSSQGRFSPRRHTVDDDGWSVVSGGSRSRSGSASAVTSPERRPLNI) is disordered. Residues 1529–1545 (SVVSGGSRSRSGSASAV) show a composition bias toward low complexity.

The protein belongs to the glycosyltransferase 28 family.

It is found in the cytoplasm. The protein resides in the membrane. It carries out the reaction a sterol + UDP-alpha-D-glucose = a sterol 3-beta-D-glucoside + UDP + H(+). The catalysed reaction is ergosterol + UDP-alpha-D-glucose = ergosteryl 3-beta-D-glucoside + UDP + H(+). Sterol glycosyltransferase responsible for the glycosylation of ergosterol to form ergosterol-glucoside. In Cryptococcus neoformans var. neoformans serotype D (strain JEC21 / ATCC MYA-565) (Filobasidiella neoformans), this protein is Sterol 3-beta-glucosyltransferase.